A 344-amino-acid polypeptide reads, in one-letter code: Estradiol 17-beta-dehydrogenase 1 (344 aa).

3-32 (STVVLITGCSSGIGLHLAVRLASDRSQSFK) is a binding site for NAD(+). Serine 143 serves as a coordination point for substrate. Tyrosine 156 functions as the Proton acceptor in the catalytic mechanism.

This sequence belongs to the short-chain dehydrogenases/reductases (SDR) family. In terms of assembly, homodimer.

It localises to the cytoplasm. The catalysed reaction is 17beta-estradiol + NAD(+) = estrone + NADH + H(+). It carries out the reaction 17beta-estradiol + NADP(+) = estrone + NADPH + H(+). The protein operates within steroid biosynthesis; estrogen biosynthesis. Favors the reduction of estrogens and androgens. Uses preferentially NADH. The protein is Estradiol 17-beta-dehydrogenase 1 (Hsd17b1) of Rattus norvegicus (Rat).